The primary structure comprises 240 residues: Uridylate kinase (240 aa).

12-15 (KLSG) serves as a coordination point for ATP. The interval 20–25 (GEQGFG) is involved in allosteric activation by GTP. Glycine 54 provides a ligand contact to UMP. ATP is bound by residues glycine 55 and arginine 59. UMP contacts are provided by residues aspartate 74 and 135–142 (TGNPYFST). Residues asparagine 163, tyrosine 169, and aspartate 172 each coordinate ATP.

Belongs to the UMP kinase family. Homohexamer.

The protein localises to the cytoplasm. It catalyses the reaction UMP + ATP = UDP + ADP. The protein operates within pyrimidine metabolism; CTP biosynthesis via de novo pathway; UDP from UMP (UMPK route): step 1/1. Its activity is regulated as follows. Allosterically activated by GTP. Inhibited by UTP. In terms of biological role, catalyzes the reversible phosphorylation of UMP to UDP. This Bacillus anthracis protein is Uridylate kinase.